The primary structure comprises 826 residues: Ferric-pyoverdine M114 receptor PbuA (826 aa).

The signal sequence occupies residues 1–44 (MSASRFMLRPLTRALLMHGATRTRLAGTGLGLALTLTAAPYVQA). The TonB box motif lies at 110–119 (DGNTVTVLGP). The TBDR plug domain occupies 160 to 271 (SLKETPQSVT…TAGGVNFVRK (112 aa)). One can recognise a TBDR beta-barrel domain in the interval 276-826 (TAHTQLSLSA…NFVMSVKADF (551 aa)). Residues 809 to 826 (GNFYGDPRNFVMSVKADF) carry the TonB C-terminal box motif.

It belongs to the TonB-dependent receptor family.

It localises to the cell outer membrane. In terms of biological role, specific receptor for the siderophore ferric pyoverdine (pseudobactin) M114. The chain is Ferric-pyoverdine M114 receptor PbuA (pbuA) from Pseudomonas sp. (strain M114).